Reading from the N-terminus, the 389-residue chain is MGKKAIQFGGGNIGRGFVAEFLHESGYEVVFIDVVPQVIESLNKNKSYEVTEISEEGEKTKTITNYRALSSKTQEPEVVKEIATADVVTCAVGPNILKFIAPVIAKGIDAREEGLPPIAVIACENAINATDALRGYIEEHLDKSRLDTLPKRARFANSAIDRIVPTQPEHAGLNVRIEKFYEWAVEQTPFGEYGHPDISAIHWVDHLEPYIERKLFTVNTGHATAAYYGYKAGKKTIHEAMAEETIHKAVHAALDETASLIISKHEITEQEQKEYVKTIISRISNPYLEDVVERVGRAPLRKLSRKERFIGPAAQLAERGMKFDALLGSIEKALQFQNVKGDDESTELAKILSEKTAAEATQQITGLETDHPLYQPVLKVVEKVQSVSK.

Residue 5-16 (AIQFGGGNIGRG) coordinates NAD(+). Residue Lys214 is part of the active site.

This sequence belongs to the mannitol dehydrogenase family. As to quaternary structure, monomer.

The catalysed reaction is D-mannitol 1-phosphate + NAD(+) = beta-D-fructose 6-phosphate + NADH + H(+). Functionally, catalyzes the NAD(H)-dependent interconversion of D-fructose 6-phosphate and D-mannitol 1-phosphate in the mannitol metabolic pathway. The protein is Mannitol-1-phosphate 5-dehydrogenase of Talaromyces marneffei (strain ATCC 18224 / CBS 334.59 / QM 7333) (Penicillium marneffei).